A 496-amino-acid chain; its full sequence is Protein RepR (496 aa).

The DNA-binding element occupies 120 to 141 (SDILTTAIDLGFMPTLIIKSDK).

Essential for replication. This is Protein RepR (repR) from Streptococcus agalactiae.